We begin with the raw amino-acid sequence, 241 residues long: Carboxy-S-adenosyl-L-methionine synthase (241 aa).

Residues Y38, 63 to 65 (GCS), 88 to 89 (DN), 116 to 117 (DI), N131, and R198 each bind S-adenosyl-L-methionine.

It belongs to the class I-like SAM-binding methyltransferase superfamily. Cx-SAM synthase family. Homodimer.

The enzyme catalyses prephenate + S-adenosyl-L-methionine = carboxy-S-adenosyl-L-methionine + 3-phenylpyruvate + H2O. In terms of biological role, catalyzes the conversion of S-adenosyl-L-methionine (SAM) to carboxy-S-adenosyl-L-methionine (Cx-SAM). This Actinobacillus pleuropneumoniae serotype 3 (strain JL03) protein is Carboxy-S-adenosyl-L-methionine synthase.